The primary structure comprises 87 residues: Large ribosomal subunit protein bL27 (87 aa).

This sequence belongs to the bacterial ribosomal protein bL27 family.

The polypeptide is Large ribosomal subunit protein bL27 (Renibacterium salmoninarum (strain ATCC 33209 / DSM 20767 / JCM 11484 / NBRC 15589 / NCIMB 2235)).